The chain runs to 866 residues: Potassium voltage-gated channel subfamily KQT member 3 (866 aa).

The segment at 1–42 (MGLKARRPAGAAGGGGDGGGGGGGAANPAGGDAAAAGDEERK) is disordered. The Cytoplasmic portion of the chain corresponds to 1-120 (MGLKARRPAG…IYDALERPRG (120 aa)). The span at 11-25 (AAGGGGDGGGGGGGA) shows a compositional bias: gly residues. The segment covering 26–36 (ANPAGGDAAAA) has biased composition (low complexity). Phosphothreonine is present on threonine 81. Residues 121 to 143 (WALLYHALVFLIVLGCLILAVLT) form a helical membrane-spanning segment. The Extracellular segment spans residues 144-153 (TFREYETVSG). A helical transmembrane segment spans residues 154–175 (DWLLLLETFAIFIFGAEFALRI). Residues 176 to 193 (WAAGCCCRYKGWRGRLKF) lie on the Cytoplasmic side of the membrane. The chain crosses the membrane as a helical span at residues 194–213 (ARKPLCMLDIFVLIASVPVV). Topologically, residues 214-225 (AVGNQGNVLATS) are extracellular. Residues 226-244 (LRSLRFLQILRMLRMDRRG) traverse the membrane as a helical; Voltage-sensor segment. A 1,2-diacyl-sn-glycero-3-phospho-(1D-myo-inositol-4,5-bisphosphate) is bound at residue arginine 243. At 245–256 (GTWKLLGSAICA) the chain is on the cytoplasmic side. Residues 257 to 282 (HSKELITAWYIGFLTLILSSFLVYLV) form a helical membrane-spanning segment. A 1,2-diacyl-sn-glycero-3-phospho-(1D-myo-inositol-4,5-bisphosphate) is bound at residue lysine 259. Over 283-302 (EKDVPEVDAQGEEMKEEFET) the chain is Extracellular. The segment at residues 303-315 (YADALWWGLITLA) is an intramembrane region (pore-forming). The Selectivity filter signature appears at 316–321 (TIGYGD). The Extracellular portion of the chain corresponds to 316–326 (TIGYGDKTPKT). Residues 327 to 353 (WEGRLIAATFSLIGVSFFALPAGILGS) form a helical membrane-spanning segment. Residues 354 to 866 (GLALKVQEQH…SIWTPSGKPT (513 aa)) are Cytoplasmic-facing. Positions 356 to 537 (ALKVQEQHRQ…RLYKKKFKET (182 aa)) are mediates interaction with calmodulin. Lysine 366 contacts a 1,2-diacyl-sn-glycero-3-phospho-(1D-myo-inositol-4,5-bisphosphate). 3 disordered regions span residues 574 to 617 (PGPP…EDQS), 656 to 676 (GFSP…EDRR), and 757 to 866 (QVEL…GKPT). Positions 837 to 866 (EPFTPSGSLPLSSTGDGISDSIWTPSGKPT) are enriched in polar residues.

Belongs to the potassium channel family. KQT (TC 1.A.1.15) subfamily. Kv7.3/KCNQ3 sub-subfamily. As to quaternary structure, heterotetramer with KCNQ2; forms heterotetrameric native M-channel responsible for the M-current. Interacts with calmodulin; the interaction is calcium-independent, constitutive and participates in the proper assembly of a functional M-channel. Heteromultimer with KCNQ5. May associate with KCNE2. Interacts with IQCJ-SCHIP1. Interacts (via the pore module) with SLC5A3/SMIT1; forms a coregulatory complex that alters ion selectivity, voltage dependence and gating kinetics of the channel. KCNQ2/KCNQ3 are ubiquitinated by NEDD4L. Ubiquitination leads to protein degradation. Degradation induced by NEDD4L is inhibited by USP36.

The protein localises to the cell membrane. It catalyses the reaction K(+)(in) = K(+)(out). The enzyme catalyses Rb(+)(in) = Rb(+)(out). It carries out the reaction Cs(+)(in) = Cs(+)(out). The catalysed reaction is Na(+)(in) = Na(+)(out). Phosphatidylinositol-4,5-bisphosphate (PIP2) potentiates the activation of KCNQ channels by enhancing the electro-mechanical coupling of the voltage-sensing domain (VSD) and the pore-forming domain (PD). In the closed state of the channel, PIP2 is anchored at the S2-S3 loop; upon channel activation, PIP2 interacts with the S4-S5 linker and is involved in channel gating. Calcium suppresses KCNQ2-KCNQ3 channel currents, with calcium-bound calmodulin inducing a change in channel configuration which leads to the reduction of channel affinity for PIP2 and subsequent current suppression. Its function is as follows. Pore-forming subunit of the voltage-gated potassium (Kv) M-channel which is responsible for the M-current, a key controller of neuronal excitability. M-channel is composed of pore-forming subunits KCNQ2 and KCNQ3 assembled as heterotetramers. The native M-current has a slowly activating and deactivating potassium conductance which plays a critical role in determining the subthreshold electrical excitability of neurons as well as the responsiveness to synaptic inputs. M-channel is selectively permeable in vitro to other cations besides potassium, in decreasing order of affinity K(+) &gt; Rb(+) &gt; Cs(+) &gt; Na(+). M-channel association with SLC5A3/SMIT1 alters channel ion selectivity, increasing Na(+) and Cs(+) permeation relative to K(+). Suppressed by activation of M1 muscarinic acetylcholine receptors. KCNQ3 also associates with KCNQ5 to form a functional channel in vitro and may also contribute to the M-current in brain. In Bos taurus (Bovine), this protein is Potassium voltage-gated channel subfamily KQT member 3.